Reading from the N-terminus, the 344-residue chain is MDTNKQKALDLAIKQIDKAFGKGALVKLGDKQIEPIESISTGSLGLDLALGIGGVPKGRIVEIYGPESSGKTTLALQIIAEAQKKGGVAAFIDAEHALDVLYAKNLGVDIDNLLVSQPDFGEQALDIVETIARSGAVDVIVIDSVAALTPKAEIEGEMGDSHMGLQARLMSQALRKLTGVVHKMDTTVIFINQIRMKIGAMGYGTPETTTGGNALKFYASVRVDVRRIATLKQGESQIGNRVRAKVVKNKVAPPFRQAEFDIMFGEGISKEGELIDYGVKMDIIDKSGSWFSYKDIKLGQGRENAKAYLKEHPEVAQEIENEIRRAMGMDDSVMMVPENEMSEE.

65-72 (GPESSGKT) serves as a coordination point for ATP.

Belongs to the RecA family.

It is found in the cytoplasm. In terms of biological role, can catalyze the hydrolysis of ATP in the presence of single-stranded DNA, the ATP-dependent uptake of single-stranded DNA by duplex DNA, and the ATP-dependent hybridization of homologous single-stranded DNAs. It interacts with LexA causing its activation and leading to its autocatalytic cleavage. This Nitratiruptor sp. (strain SB155-2) protein is Protein RecA.